The primary structure comprises 328 residues: Peroxisomal adenine nucleotide transporter 1 (328 aa).

Transmembrane regions (helical) follow at residues 1-21 (MLTLESALTGAVASAMANIAV), 78-98 (TVTTVATFVQNFVYFFWYTFI), 128-148 (LVLGVAAASISQLFTSPMAVV), 185-202 (LRTGLALTINPSITYASF), 226-246 (FILGVLSKMISTLVTQPLIVA), and 277-297 (WKGVLPQLTKGVIVQGLLFAF). Solcar repeat units lie at residues 1–101 (MLTL…IRKS), 122–208 (PSTI…LKEV), and 220–304 (LSAV…LTKS).

Belongs to the mitochondrial carrier (TC 2.A.29) family.

The protein resides in the peroxisome membrane. Functionally, adenine nucleotide transporter involved in the uniport of ATP and adenine nucleotide hetero-exchange transport between the cytosol and the peroxisomal lumen. This transport is accompanied by a proton transport from the peroxisomal lumen to the cytosol. Transport of ATP into the peroxisome is required for beta-oxidation of medium-chain fatty acids. Required for growth on medium-chain fatty acids, pH gradient formation in peroxisomes and for normal peroxisome proliferation. The protein is Peroxisomal adenine nucleotide transporter 1 (ANT1) of Saccharomyces cerevisiae (strain ATCC 204508 / S288c) (Baker's yeast).